Reading from the N-terminus, the 134-residue chain is MLSPKRTRFRKQHRGRMKGISHRGNHISFGKYALQALEPAWITSRQIEAGRRAMTRNARRGGKIWVRIFPDKPVTLRPAETRMGSGKGSPEYWVAVVKPGRILYEMGGVTENIARRAISLAASKMPIQTQFIIS.

A disordered region spans residues 1–22; sequence MLSPKRTRFRKQHRGRMKGISH.

The protein belongs to the universal ribosomal protein uL16 family. Part of the 50S ribosomal subunit.

The protein resides in the plastid. The protein localises to the chloroplast. This Nicotiana tomentosiformis (Tobacco) protein is Large ribosomal subunit protein uL16c.